A 179-amino-acid chain; its full sequence is Protein GrpE (179 aa).

The segment at 1 to 20 (MSEETKEEIKNEKVDEEVTE) is disordered.

It belongs to the GrpE family. As to quaternary structure, homodimer.

Its subcellular location is the cytoplasm. Functionally, participates actively in the response to hyperosmotic and heat shock by preventing the aggregation of stress-denatured proteins, in association with DnaK and GrpE. It is the nucleotide exchange factor for DnaK and may function as a thermosensor. Unfolded proteins bind initially to DnaJ; upon interaction with the DnaJ-bound protein, DnaK hydrolyzes its bound ATP, resulting in the formation of a stable complex. GrpE releases ADP from DnaK; ATP binding to DnaK triggers the release of the substrate protein, thus completing the reaction cycle. Several rounds of ATP-dependent interactions between DnaJ, DnaK and GrpE are required for fully efficient folding. This chain is Protein GrpE, found in Lactococcus lactis subsp. cremoris (strain MG1363).